The primary structure comprises 225 residues: MADS-box transcription factor 5 (225 aa).

Positions Met1–Ser61 constitute an MADS-box domain. The region spanning Glu89 to Glu179 is the K-box domain.

In terms of assembly, may interact with the K-box of MADS6.

It localises to the nucleus. In terms of biological role, probable transcription factor. This Oryza sativa subsp. indica (Rice) protein is MADS-box transcription factor 5 (MADS5).